The chain runs to 833 residues: Leucine--tRNA ligase (833 aa).

A 'HIGH' region motif is present at residues 41 to 52 (PYPSGAGLHVGH). Residues 610-614 (KMSKS) carry the 'KMSKS' region motif. Lys613 is a binding site for ATP.

This sequence belongs to the class-I aminoacyl-tRNA synthetase family.

It localises to the cytoplasm. It carries out the reaction tRNA(Leu) + L-leucine + ATP = L-leucyl-tRNA(Leu) + AMP + diphosphate. This is Leucine--tRNA ligase from Streptococcus gordonii (strain Challis / ATCC 35105 / BCRC 15272 / CH1 / DL1 / V288).